The sequence spans 144 residues: 3-dehydroquinate dehydratase (144 aa).

The Proton acceptor role is filled by Y22. Residues N73, H79, and D86 each contribute to the substrate site. H99 acts as the Proton donor in catalysis. Substrate contacts are provided by residues 100–101 (LS) and R110.

This sequence belongs to the type-II 3-dehydroquinase family. As to quaternary structure, homododecamer.

It catalyses the reaction 3-dehydroquinate = 3-dehydroshikimate + H2O. It participates in metabolic intermediate biosynthesis; chorismate biosynthesis; chorismate from D-erythrose 4-phosphate and phosphoenolpyruvate: step 3/7. Catalyzes a trans-dehydration via an enolate intermediate. The protein is 3-dehydroquinate dehydratase of Geotalea daltonii (strain DSM 22248 / JCM 15807 / FRC-32) (Geobacter daltonii).